Here is a 145-residue protein sequence, read N- to C-terminus: Large ribosomal subunit protein uL13 (145 aa).

The protein belongs to the universal ribosomal protein uL13 family. Part of the 50S ribosomal subunit.

Its function is as follows. This protein is one of the early assembly proteins of the 50S ribosomal subunit, although it is not seen to bind rRNA by itself. It is important during the early stages of 50S assembly. In Bacillus cytotoxicus (strain DSM 22905 / CIP 110041 / 391-98 / NVH 391-98), this protein is Large ribosomal subunit protein uL13.